Reading from the N-terminus, the 636-residue chain is Receptor-like kinase LIP1 (636 aa).

The interval 18–57 is disordered; sequence NAPCTTNETNDDNVEHDEFRPPVVATTKRTEEREPAEQQP. In terms of domain architecture, Protein kinase spans 74–352; it reads FRQECLLGEG…SDVMVALSFL (279 aa). Residues 80–88 and Lys103 contribute to the ATP site; that span reads LGEGGFGRV. The active-site Proton acceptor is the Asp201. Residues Ser205 and Ser236 each carry the phosphoserine modification. A Phosphothreonine modification is found at Thr242. At Tyr250 the chain carries Phosphotyrosine. The tract at residues 389-636 is disordered; that stretch reads FCISRKDVGN…EEEHISSDHD (248 aa). The stretch at 403 to 434 forms a coiled coil; the sequence is SSDSEDEEEEKEQKAEKEEESTSKKRQEQEET. Positions 413–431 are enriched in basic and acidic residues; it reads KEQKAEKEEESTSKKRQEQ. Over residues 432-455 the composition is skewed to acidic residues; sequence EETATDSDDESDSNSEKDQEEEQS. The segment covering 480–489 has biased composition (polar residues); the sequence is TNATAQSLKI. 2 stretches are compositionally biased toward basic and acidic residues: residues 522–531 and 554–566; these read DSGRDHDDSS and HETR…DDSP. Residues 567-576 are compositionally biased toward polar residues; sequence RNTSMRINSL. 2 stretches are compositionally biased toward basic and acidic residues: residues 588–603 and 619–636; these read NHQT…KSED and SLHR…SDHD.

Belongs to the protein kinase superfamily. Ser/Thr protein kinase family. Interacts with PRK6. Post-translationally, palmitoylated. In terms of tissue distribution, expressed in mature pollen and in germinating pollen tubes.

The protein resides in the cell membrane. The protein localises to the cytoplasm. Functionally, involved in pollen tube guidance into micropyle. Participates in perception of the ovule-secreted peptide signal LURE1. This Arabidopsis thaliana (Mouse-ear cress) protein is Receptor-like kinase LIP1.